Reading from the N-terminus, the 310-residue chain is Acetaldehyde dehydrogenase 1 (310 aa).

Residue 12–15 coordinates NAD(+); sequence SGNI. The active-site Acyl-thioester intermediate is cysteine 132. Residues 163–171 and asparagine 287 each bind NAD(+); that span reads SAGPGTRAN.

It belongs to the acetaldehyde dehydrogenase family.

The catalysed reaction is acetaldehyde + NAD(+) + CoA = acetyl-CoA + NADH + H(+). In Pseudomonas putida (strain W619), this protein is Acetaldehyde dehydrogenase 1.